Reading from the N-terminus, the 75-residue chain is Small ribosomal subunit protein bS18 (75 aa).

This sequence belongs to the bacterial ribosomal protein bS18 family. Part of the 30S ribosomal subunit. Forms a tight heterodimer with protein bS6.

In terms of biological role, binds as a heterodimer with protein bS6 to the central domain of the 16S rRNA, where it helps stabilize the platform of the 30S subunit. The sequence is that of Small ribosomal subunit protein bS18 from Wigglesworthia glossinidia brevipalpis.